A 464-amino-acid chain; its full sequence is Bifunctional NAD(P)H-hydrate repair enzyme Nnr (464 aa).

Residues 1-205 (MEFISSRDMQ…PESFENLCGP (205 aa)) are NAD(P)H-hydrate epimerase. One can recognise a YjeF N-terminal domain in the interval 9–201 (MQILDTNCEY…DIGIPESFEN (193 aa)). Positions 55-59 (NNGGD) are NADPHX 1; for epimerase activity. K(+) contacts are provided by N56 and D114. An NADPHX 1; for epimerase activity region spans residues 118 to 124 (GTGVRGR). (6S)-NADPHX-binding residues include Y129 and D147. T150 contacts K(+). Positions 203–461 (CGPGDVAFSY…KAIPEAILRC (259 aa)) constitute a YjeF C-terminal domain. The interval 205–464 (PGDVAFSYKR…PEAILRCKSF (260 aa)) is ADP-dependent (S)-NAD(P)H-hydrate dehydratase. G305 lines the (6S)-NADPHX pocket. The interval 348–354 (HRGEFGR) is NADPHX 2; for dehydratase activity. ADP contacts are provided by residues 375–379 (KGRED) and 394–403 (NAGMTVGGTG). A (6S)-NADPHX-binding site is contributed by D404.

In the N-terminal section; belongs to the NnrE/AIBP family. The protein in the C-terminal section; belongs to the NnrD/CARKD family. K(+) is required as a cofactor.

It catalyses the reaction (6S)-NADHX + ADP = AMP + phosphate + NADH + H(+). The enzyme catalyses (6S)-NADPHX + ADP = AMP + phosphate + NADPH + H(+). It carries out the reaction (6R)-NADHX = (6S)-NADHX. The catalysed reaction is (6R)-NADPHX = (6S)-NADPHX. Its function is as follows. Bifunctional enzyme that catalyzes the epimerization of the S- and R-forms of NAD(P)HX and the dehydration of the S-form of NAD(P)HX at the expense of ADP, which is converted to AMP. This allows the repair of both epimers of NAD(P)HX, a damaged form of NAD(P)H that is a result of enzymatic or heat-dependent hydration. This chain is Bifunctional NAD(P)H-hydrate repair enzyme Nnr (nnr), found in Archaeoglobus fulgidus (strain ATCC 49558 / DSM 4304 / JCM 9628 / NBRC 100126 / VC-16).